We begin with the raw amino-acid sequence, 371 residues long: Alanine racemase (371 aa).

The active-site Proton acceptor; specific for D-alanine is K40. K40 carries the post-translational modification N6-(pyridoxal phosphate)lysine. R136 contributes to the substrate binding site. Y263 (proton acceptor; specific for L-alanine) is an active-site residue. A substrate-binding site is contributed by M310.

The protein belongs to the alanine racemase family. Pyridoxal 5'-phosphate serves as cofactor.

The catalysed reaction is L-alanine = D-alanine. It participates in amino-acid biosynthesis; D-alanine biosynthesis; D-alanine from L-alanine: step 1/1. Catalyzes the interconversion of L-alanine and D-alanine. May also act on other amino acids. The protein is Alanine racemase (alr) of Streptococcus mutans serotype c (strain ATCC 700610 / UA159).